The following is a 282-amino-acid chain: sn-glycerol-3-phosphate transport system permease protein UgpE (282 aa).

The next 6 helical transmembrane spans lie at 14-34 (LMLI…FVAS), 86-106 (IAIA…IVFF), 112-132 (MAFF…RILP), 136-156 (VIVD…LMAS), 201-221 (IAAL…WPLL), and 248-268 (WNYV…VVVL). An ABC transmembrane type-1 domain is found at 78–269 (LFNTFVVAIA…IPPVAVVVLM (192 aa)).

The protein belongs to the binding-protein-dependent transport system permease family. In terms of assembly, the complex is composed of two ATP-binding proteins (UgpC), two transmembrane proteins (UgpA and UgpE) and a solute-binding protein (UgpB).

The protein localises to the cell inner membrane. Functionally, part of the ABC transporter complex UgpBAEC involved in sn-glycerol-3-phosphate (G3P) import. Probably responsible for the translocation of the substrate across the membrane. This is sn-glycerol-3-phosphate transport system permease protein UgpE (ugpE) from Rhizobium meliloti (strain 1021) (Ensifer meliloti).